Consider the following 93-residue polypeptide: UPF0358 protein OB1428 (93 aa).

It belongs to the UPF0358 family.

The chain is UPF0358 protein OB1428 from Oceanobacillus iheyensis (strain DSM 14371 / CIP 107618 / JCM 11309 / KCTC 3954 / HTE831).